Reading from the N-terminus, the 822-residue chain is uncharacterized protein (822 aa).

Positions 1–230 are disordered; that stretch reads MARGKRSTQR…NAAPLNKTDA (230 aa). Ser-27 bears the Phosphoserine mark. Basic residues predominate over residues 34–44; sequence SKAKKNKKKLN. Ser-47, Ser-51, and Ser-55 each carry phosphoserine. At Tyr-57 the chain carries Phosphotyrosine. Residues 61-70 show a composition bias toward acidic residues; that stretch reads PEDDEVDEEV. Basic residues predominate over residues 73-85; sequence VKKKPSKKSKKAK. Residues 92–106 show a composition bias toward acidic residues; sequence FADEQSVEEEEEEDS. Residue Ser-97 is modified to Phosphoserine. The span at 111 to 121 shows a compositional bias: basic residues; it reads RKNKKSSKKAS. 2 stretches are compositionally biased toward acidic residues: residues 129–144 and 163–172; these read LADD…EESE and SEALDDGDIE. Phosphoserine occurs at positions 137 and 163. ABC transporter domains are found at residues 276–519 and 594–809; these read LQVE…VQLA and IKFQ…AKER. ATP is bound by residues 308–315 and 627–634; these read APNGSGKS and GPNGAGKT.

It belongs to the ABC transporter superfamily.

Its subcellular location is the cytoplasm. This is an uncharacterized protein from Schizosaccharomyces pombe (strain 972 / ATCC 24843) (Fission yeast).